The chain runs to 616 residues: Chaperone protein HscA (616 aa).

This sequence belongs to the heat shock protein 70 family.

Its function is as follows. Chaperone involved in the maturation of iron-sulfur cluster-containing proteins. Has a low intrinsic ATPase activity which is markedly stimulated by HscB. Involved in the maturation of IscU. In Citrobacter koseri (strain ATCC BAA-895 / CDC 4225-83 / SGSC4696), this protein is Chaperone protein HscA.